Here is a 392-residue protein sequence, read N- to C-terminus: Putative nicotinate phosphoribosyltransferase (392 aa).

Residues Tyr-21, Phe-138, and Thr-179 each contribute to the nicotinate site. Position 182 is a phosphohistidine (His-182). Arg-235 provides a ligand contact to nicotinate. Residues Ser-240, Gly-272, and Thr-293 each contribute to the 5-phospho-alpha-D-ribose 1-diphosphate site. Zn(2+) contacts are provided by Cys-330, Cys-333, Cys-348, and Cys-350.

It belongs to the NAPRTase family. Highly divergent. In terms of assembly, homodimer. Forms a trimer of dimers in the crystal. Transiently phosphorylated on a His residue during the reaction cycle. Phosphorylation strongly increases the affinity for substrates and increases the rate of nicotinate D-ribonucleotide production. Dephosphorylation regenerates the low-affinity form of the enzyme, leading to product release.

It catalyses the reaction nicotinate + 5-phospho-alpha-D-ribose 1-diphosphate + ATP + H2O = nicotinate beta-D-ribonucleotide + ADP + phosphate + diphosphate. Its pathway is cofactor biosynthesis; NAD(+) biosynthesis; nicotinate D-ribonucleotide from nicotinate: step 1/1. Functionally, catalyzes the synthesis of beta-nicotinate D-ribonucleotide from nicotinate and 5-phospho-D-ribose 1-phosphate at the expense of ATP. The protein is Putative nicotinate phosphoribosyltransferase of Thermoplasma acidophilum (strain ATCC 25905 / DSM 1728 / JCM 9062 / NBRC 15155 / AMRC-C165).